A 941-amino-acid polypeptide reads, in one-letter code: Probable respiratory burst oxidase homolog protein I (941 aa).

The Cytoplasmic portion of the chain corresponds to 1–374 (MSMSFSGGTH…LYSLQDNWKR (374 aa)). Disordered stretches follow at residues 29–48 (PSLP…SGEE) and 103–166 (ERLT…SGTE). The span at 36–45 (SPSPSSSSSS) shows a compositional bias: low complexity. The segment covering 103 to 117 (ERLTAGTNSKQQIQK) has biased composition (polar residues). EF-hand-like stretches follow at residues 196–204 (SKDGYLFKS) and 232–243 (RRIMVDKINLQE). The EF-hand domain maps to 254–289 (ESFDSRLQIFFNMVKNGDGRITENEVKEIIILSASA). Ca(2+)-binding residues include asparagine 269, aspartate 271, arginine 273, and glutamate 278. Phosphoserine is present on residues serine 346 and serine 350. A helical membrane pass occupies residues 375–395 (IWVLTLWFVIMAWLFMWKCYQ). Residues 396-407 (YKHKDAFHVMGY) lie on the Extracellular side of the membrane. The helical transmembrane segment at 408–428 (CLVMAKGAAETLKFNMALILL) threads the bilayer. Residues 413–570 (KGAAETLKFN…LLLTVYVLLV (158 aa)) form the Ferric oxidoreductase domain. The Cytoplasmic portion of the chain corresponds to 429 to 514 (PVCRNTITYL…YFGLVNTPVG (86 aa)). A helical transmembrane segment spans residues 515–535 (ITGIIMVAFMLIAFTLASRRC). The Extracellular portion of the chain corresponds to 536–557 (RRNLTKLPKPFDKLTGYNAFWY). A helical membrane pass occupies residues 558 to 578 (SHHLLLTVYVLLVIHGVSLYL). Over 579–586 (EHKWYRKT) the chain is Cytoplasmic. A helical membrane pass occupies residues 587–604 (VWMYLAVPVLLYVGERIF). At 605–731 (RFFRSRLYTV…PYGAPAQDHW (127 aa)) the chain is on the extracellular side. Residues 609 to 729 (SRLYTVEICK…DGPYGAPAQD (121 aa)) form the FAD-binding FR-type domain. Residues 732–752 (KYDVVLLVGLGIGATPFVSIL) form a helical membrane-spanning segment. Residues 753-941 (RDLLNNIIKQ…TRFDFHKEQF (189 aa)) lie on the Cytoplasmic side of the membrane.

It belongs to the RBOH (TC 5.B.1.3) family. In terms of assembly, monomer and homodimer.

It is found in the membrane. Calcium-dependent NADPH oxidase that generates superoxide. In Arabidopsis thaliana (Mouse-ear cress), this protein is Probable respiratory burst oxidase homolog protein I (RBOHI).